The sequence spans 359 residues: Double-stranded RNA-binding protein 3 (359 aa).

DRBM domains lie at 1–70 (MYKN…ALSS) and 87–155 (IYKN…SLRK). The span at 266-280 (EKKQSLDDPKPEMRI) shows a compositional bias: basic and acidic residues. Disordered regions lie at residues 266-292 (EKKQ…SSSV) and 328-359 (APPP…SLPN). Residues 328–338 (APPPKPNPNPN) show a composition bias toward pro residues.

Binds double-stranded RNA. The protein is Double-stranded RNA-binding protein 3 (DRB3) of Arabidopsis thaliana (Mouse-ear cress).